Consider the following 193-residue polypeptide: Xanthine phosphoribosyltransferase (193 aa).

2 residues coordinate xanthine: L20 and N27. Position 129–133 (129–133 (ANGKA)) interacts with 5-phospho-alpha-D-ribose 1-diphosphate. Residue K157 participates in xanthine binding.

Belongs to the purine/pyrimidine phosphoribosyltransferase family. Xpt subfamily. As to quaternary structure, homodimer.

It is found in the cytoplasm. It carries out the reaction XMP + diphosphate = xanthine + 5-phospho-alpha-D-ribose 1-diphosphate. It functions in the pathway purine metabolism; XMP biosynthesis via salvage pathway; XMP from xanthine: step 1/1. Converts the preformed base xanthine, a product of nucleic acid breakdown, to xanthosine 5'-monophosphate (XMP), so it can be reused for RNA or DNA synthesis. This chain is Xanthine phosphoribosyltransferase, found in Bifidobacterium animalis subsp. lactis (strain AD011).